A 121-amino-acid chain; its full sequence is Protein ripply2.1 (121 aa).

The interval 1-69 (MEPNQQRSCG…DKGKPPSFQH (69 aa)) is disordered. The short motif at 29 to 32 (WRPW) is the WRPW motif element. Residues 39 to 57 (HVQNPPTAQQQFYSDNQSH) show a composition bias toward polar residues. The segment at 69 to 104 (HPVKLFWPKSRCYDFMYQEAEELLRHFPVQATISLY) is ripply homology domain.

Belongs to the ripply family. In terms of tissue distribution, expressed in the presomitic mesoderm (PSM) in the anterior halves of somitomeres S-0, S-I and S-II and in the newly formed somites.

The protein resides in the nucleus. Required during somitogenesis to regulate somite differentiation and the positioning of the presomitic mesoderm-front. Represses the expression of genes involved in somite segmentation by acting with the corepressor tle4 to down-regulate the transcriptional activity of tbx6. Also regulates retinoic acid signaling during somitogenesis and is necessary for the expression of aldh1a2/raldh2. In Xenopus laevis (African clawed frog), this protein is Protein ripply2.1 (ripply2.1).